Consider the following 61-residue polypeptide: Small ribosomal subunit protein uS14 (61 aa).

Zn(2+) contacts are provided by cysteine 24, cysteine 27, cysteine 40, and cysteine 43.

Belongs to the universal ribosomal protein uS14 family. Zinc-binding uS14 subfamily. In terms of assembly, part of the 30S ribosomal subunit. Contacts proteins S3 and S10. The cofactor is Zn(2+).

Its function is as follows. Binds 16S rRNA, required for the assembly of 30S particles and may also be responsible for determining the conformation of the 16S rRNA at the A site. The chain is Small ribosomal subunit protein uS14 from Sulfurovum sp. (strain NBC37-1).